A 178-amino-acid chain; its full sequence is Ribulose bisphosphate carboxylase small subunit, chloroplastic 4 (178 aa).

The N-terminal 54 residues, 1–54 (MASISSTVATVSRAAPAQANMVAPFTGLKSNAAFPATKKANDFSTLPSNGGRVQ), are a transit peptide targeting the chloroplast.

Belongs to the RuBisCO small chain family. As to quaternary structure, heterohexadecamer of 8 large and 8 small subunits.

It is found in the plastid. The protein localises to the chloroplast. In terms of biological role, ruBisCO catalyzes two reactions: the carboxylation of D-ribulose 1,5-bisphosphate, the primary event in carbon dioxide fixation, as well as the oxidative fragmentation of the pentose substrate. Both reactions occur simultaneously and in competition at the same active site. Although the small subunit is not catalytic it is essential for maximal activity. The chain is Ribulose bisphosphate carboxylase small subunit, chloroplastic 4 from Flaveria pringlei.